We begin with the raw amino-acid sequence, 242 residues long: Ribonuclease 3 (242 aa).

An RNase III domain is found at 14 to 142 (LRRFAARFAL…VIGALYLSTG (129 aa)). Position 56 (Glu56) interacts with Mg(2+). Asp60 is an active-site residue. Residues Asp128 and Glu131 each coordinate Mg(2+). The active site involves Glu131. The DRBM domain occupies 170–235 (NHKSALQELT…ARGAYAALRS (66 aa)).

It belongs to the ribonuclease III family. In terms of assembly, homodimer. Mg(2+) serves as cofactor.

The protein resides in the cytoplasm. It catalyses the reaction Endonucleolytic cleavage to 5'-phosphomonoester.. Functionally, digests double-stranded RNA. Involved in the processing of primary rRNA transcript to yield the immediate precursors to the large and small rRNAs (23S and 16S). Processes some mRNAs, and tRNAs when they are encoded in the rRNA operon. Processes pre-crRNA and tracrRNA of type II CRISPR loci if present in the organism. In Gloeobacter violaceus (strain ATCC 29082 / PCC 7421), this protein is Ribonuclease 3.